A 601-amino-acid chain; its full sequence is Glutathione-regulated potassium-efflux system protein KefB (601 aa).

A run of 13 helical transmembrane segments spans residues 4 to 24 (ADLL…VPLA), 29 to 49 (IGAV…GLGF), 55 to 75 (EILH…GLEL), 87 to 107 (IFGV…GLLM), 111 to 131 (FLWQ…TAMA), 152 to 172 (VLLF…LLAG), 177 to 197 (HFDW…LIGG), 207 to 227 (FIAA…LVLS), 230 to 250 (LFMD…GVLL), 262 to 282 (AIDP…GMSL), 284 to 304 (LGVL…LVVI), 324 to 344 (MQFA…FSTA), and 356 to 376 (ALLL…MKGI). The RCK N-terminal domain maps to 400–519 (KPQVVVVGFG…AGVTQFSRET (120 aa)).

This sequence belongs to the monovalent cation:proton antiporter 2 (CPA2) transporter (TC 2.A.37) family. KefB subfamily. In terms of assembly, interacts with the regulatory subunit KefG.

The protein localises to the cell inner membrane. Its function is as follows. Pore-forming subunit of a potassium efflux system that confers protection against electrophiles. Catalyzes K(+)/H(+) antiport. In Salmonella typhi, this protein is Glutathione-regulated potassium-efflux system protein KefB.